We begin with the raw amino-acid sequence, 258 residues long: MLDLSGKHAFVTGIANNRSIAWGIAQQLHQAGAEIGVSYLPDEKGRFEKKVRELTEPLHPTLVLPGDVQDDAQVDALFHSVKEKWGKLDILIHCLAFADKSGLTGNYTDIPKEAFSQAMEISTYSLGRLARGAKPLMTNGGSIITLTYFGGVKVIPNYNLMGVAKAGLEMTVRYLAAELGPQNIRVNGISAGPIRTLASSAVGGILDMIHHVEEVAPLKRTVTQTEVGNTAAFLASDLSSGITGQIIYVDSGYEIMGM.

NAD(+) is bound by residues glycine 13, 19-20, 67-68, and leucine 95; these read SI and DV. Alanine 98 contributes to the substrate binding site. Active-site proton acceptor residues include tyrosine 148 and tyrosine 158. NAD(+) is bound by residues lysine 165 and 194–198; that span reads IRTLA.

It belongs to the short-chain dehydrogenases/reductases (SDR) family. FabI subfamily. As to quaternary structure, homotetramer.

The enzyme catalyses a 2,3-saturated acyl-[ACP] + NAD(+) = a (2E)-enoyl-[ACP] + NADH + H(+). It participates in lipid metabolism; fatty acid biosynthesis. Functionally, catalyzes the reduction of a carbon-carbon double bond in an enoyl moiety that is covalently linked to an acyl carrier protein (ACP). Involved in the elongation cycle of fatty acid which are used in the lipid metabolism. This Synechocystis sp. (strain ATCC 27184 / PCC 6803 / Kazusa) protein is Enoyl-[acyl-carrier-protein] reductase [NADH] FabI (fabI).